A 305-amino-acid chain; its full sequence is Probable GTP 3',8-cyclase (305 aa).

The Radical SAM core domain occupies Asn6–Lys228. A GTP-binding site is contributed by Arg15. [4Fe-4S] cluster-binding residues include Cys22 and Cys26. An S-adenosyl-L-methionine-binding site is contributed by Tyr28. Cys29 contributes to the [4Fe-4S] cluster binding site. Position 62 (Arg62) interacts with GTP. Gly66 provides a ligand contact to S-adenosyl-L-methionine. Residue Thr92 coordinates GTP. Ser116 contacts S-adenosyl-L-methionine. Lys153 provides a ligand contact to GTP. [4Fe-4S] cluster-binding residues include Cys249 and Cys252. GTP is bound at residue Arg254–Arg256. Position 266 (Cys266) interacts with [4Fe-4S] cluster.

Belongs to the radical SAM superfamily. MoaA family. Requires [4Fe-4S] cluster as cofactor.

The enzyme catalyses GTP + AH2 + S-adenosyl-L-methionine = (8S)-3',8-cyclo-7,8-dihydroguanosine 5'-triphosphate + 5'-deoxyadenosine + L-methionine + A + H(+). It functions in the pathway cofactor biosynthesis; molybdopterin biosynthesis. Functionally, catalyzes the cyclization of GTP to (8S)-3',8-cyclo-7,8-dihydroguanosine 5'-triphosphate. This Methanothermobacter marburgensis (strain ATCC BAA-927 / DSM 2133 / JCM 14651 / NBRC 100331 / OCM 82 / Marburg) (Methanobacterium thermoautotrophicum) protein is Probable GTP 3',8-cyclase.